The primary structure comprises 360 residues: Heat-inducible transcription repressor HrcA (360 aa).

This sequence belongs to the HrcA family.

In terms of biological role, negative regulator of class I heat shock genes (grpE-dnaK-dnaJ and groELS operons). Prevents heat-shock induction of these operons. The sequence is that of Heat-inducible transcription repressor HrcA from Mesorhizobium japonicum (strain LMG 29417 / CECT 9101 / MAFF 303099) (Mesorhizobium loti (strain MAFF 303099)).